The following is a 283-amino-acid chain: Pantothenate synthetase (283 aa).

ATP is bound at residue 30–37 (MGCLHEGH). The active-site Proton donor is His-37. Gln-61 is a binding site for (R)-pantoate. Residue Gln-61 participates in beta-alanine binding. ATP is bound at residue 147-150 (GQKD). Gln-153 is a (R)-pantoate binding site. ATP is bound by residues Val-176 and 184 to 187 (KSSR).

The protein belongs to the pantothenate synthetase family. In terms of assembly, homodimer.

Its subcellular location is the cytoplasm. It carries out the reaction (R)-pantoate + beta-alanine + ATP = (R)-pantothenate + AMP + diphosphate + H(+). It participates in cofactor biosynthesis; (R)-pantothenate biosynthesis; (R)-pantothenate from (R)-pantoate and beta-alanine: step 1/1. Catalyzes the condensation of pantoate with beta-alanine in an ATP-dependent reaction via a pantoyl-adenylate intermediate. The sequence is that of Pantothenate synthetase from Clostridium novyi (strain NT).